We begin with the raw amino-acid sequence, 252 residues long: Neurexophilin-3 (252 aa).

The first 22 residues, 1–22, serve as a signal peptide directing secretion; that stretch reads MQLTRCCFVFLVQGSLYLVICG. An II region spans residues 23-75; that stretch reads QDDGPPGSEDPEHDDHEGQPRPRVPRKRGHISPKSRPLANSTLLGLLAPPGEV. Positions 27–59 are disordered; it reads PPGSEDPEHDDHEGQPRPRVPRKRGHISPKSRP. A compositionally biased stretch (basic residues) spans 45–55; it reads RVPRKRGHISP. 4 N-linked (GlcNAc...) asparagine glycosylation sites follow: Asn-62, Asn-127, Asn-137, and Asn-143. Residues 76–157 form an III region; the sequence is WGVLGQPPNR…LVPPSKAVEF (82 aa). The IV (linker domain) stretch occupies residues 158–166; it reads HQEQQIFIE. Residues 167–252 are v (Cys-rich); sequence AKASKIFNCR…HSDTPYYPSG (86 aa).

This sequence belongs to the neurexophilin family. Post-translationally, may be proteolytically processed at the boundary between the N-terminal non-conserved and the central conserved domain in neuron-like cells. As to expression, highest level in brain, present also in lung, kidney and testis.

The protein localises to the secreted. May be signaling molecules that resemble neuropeptides. Ligand for alpha-neurexins. The protein is Neurexophilin-3 (Nxph3) of Mus musculus (Mouse).